Here is a 371-residue protein sequence, read N- to C-terminus: Cytochrome b (371 aa).

The next 4 membrane-spanning stretches (helical) occupy residues 25–45, 69–90, 105–125, and 170–190; these read FGSMLLTCLALQVLTGFFLAV, WMMQNLHAIGASMFFICIYIHI, WMSGITLLITLMATAFFGYVL, and FFALHFILPFAIISLSSLHII. Residues His75 and His89 each coordinate heme b. 2 residues coordinate heme b: His174 and His188. An a ubiquinone-binding site is contributed by His193. Transmembrane regions (helical) follow at residues 218-238, 280-300, 312-332, and 339-358; these read HKDLLLLTLMILLLLIIVSFS, LGGALALVMSIMILFTIPFTH, LSQLMFWALISTFVTITWAAT, and FIIISQVTSTLYFTFFLSIP.

The protein belongs to the cytochrome b family. The cytochrome bc1 complex contains 3 respiratory subunits (MT-CYB, CYC1 and UQCRFS1), 2 core proteins (UQCRC1 and UQCRC2) and probably 6 low-molecular weight proteins. The cofactor is heme b.

The protein resides in the mitochondrion inner membrane. Component of the ubiquinol-cytochrome c reductase complex (complex III or cytochrome b-c1 complex) that is part of the mitochondrial respiratory chain. The b-c1 complex mediates electron transfer from ubiquinol to cytochrome c. Contributes to the generation of a proton gradient across the mitochondrial membrane that is then used for ATP synthesis. In Antaresia childreni (Children's python), this protein is Cytochrome b (MT-CYB).